The sequence spans 257 residues: Aspartate/glutamate leucyltransferase (257 aa).

Belongs to the R-transferase family. Bpt subfamily.

It localises to the cytoplasm. The enzyme catalyses N-terminal L-glutamyl-[protein] + L-leucyl-tRNA(Leu) = N-terminal L-leucyl-L-glutamyl-[protein] + tRNA(Leu) + H(+). It catalyses the reaction N-terminal L-aspartyl-[protein] + L-leucyl-tRNA(Leu) = N-terminal L-leucyl-L-aspartyl-[protein] + tRNA(Leu) + H(+). Functions in the N-end rule pathway of protein degradation where it conjugates Leu from its aminoacyl-tRNA to the N-termini of proteins containing an N-terminal aspartate or glutamate. The sequence is that of Aspartate/glutamate leucyltransferase from Nitrobacter hamburgensis (strain DSM 10229 / NCIMB 13809 / X14).